The following is a 330-amino-acid chain: Malate dehydrogenase (330 aa).

Position 12–18 (12–18 (GAAGQIG)) interacts with NAD(+). Positions 93 and 99 each coordinate substrate. NAD(+) is bound by residues asparagine 106, glutamine 113, and 130–132 (VGN). The substrate site is built by asparagine 132 and arginine 163. The active-site Proton acceptor is histidine 188.

This sequence belongs to the LDH/MDH superfamily. MDH type 2 family.

The catalysed reaction is (S)-malate + NAD(+) = oxaloacetate + NADH + H(+). Functionally, catalyzes the reversible oxidation of malate to oxaloacetate. The chain is Malate dehydrogenase from Legionella pneumophila (strain Lens).